A 305-amino-acid chain; its full sequence is MVDKLTHLKQLEAESIHIIREVAAEFDNPVMLYSIGKDSAVMLHLARKAFFPGKLPFPVMHVDTQWKFQEMYSFRDKMVEEMGLELITHVNPEGVAQGINPFTHGSSKHTDIMKTQGLKQALDKHGFDAAFGGARRDEEKSRAKERVYSFRDSKHRWDPKNQRPELWNVYNGKVNKGESIRVFPLSNWTELDIWQYIYLEGIPIVPLYFAAEREVIEKNGTLIMIDDERILEHLSEEEKARIVKKKVRFRTLGCYPLTGAVESEAETLTDIIQEMLLTRTSERQGRVIDHDGAGSMEDKKRQGYF.

The protein belongs to the PAPS reductase family. CysD subfamily. As to quaternary structure, heterodimer composed of CysD, the smaller subunit, and CysN.

It catalyses the reaction sulfate + ATP + H(+) = adenosine 5'-phosphosulfate + diphosphate. Its pathway is sulfur metabolism; hydrogen sulfide biosynthesis; sulfite from sulfate: step 1/3. In terms of biological role, with CysN forms the ATP sulfurylase (ATPS) that catalyzes the adenylation of sulfate producing adenosine 5'-phosphosulfate (APS) and diphosphate, the first enzymatic step in sulfur assimilation pathway. APS synthesis involves the formation of a high-energy phosphoric-sulfuric acid anhydride bond driven by GTP hydrolysis by CysN coupled to ATP hydrolysis by CysD. This chain is Sulfate adenylyltransferase subunit 2, found in Pseudomonas putida (strain ATCC 700007 / DSM 6899 / JCM 31910 / BCRC 17059 / LMG 24140 / F1).